The chain runs to 504 residues: L-amino-acid oxidase (504 aa).

The first 18 residues, 1 to 18 (MNVFFMFSLLFLAALGSC), serve as a signal peptide directing secretion. Cysteines 28 and 191 form a disulfide. FAD is bound by residues 61-62 (MS), 81-82 (EA), Arg89, and 105-108 (GPMR). Arg108 contacts substrate. An N-linked (GlcNAc...) asparagine glycan is attached at Asn190. Position 241 (His241) interacts with substrate. An FAD-binding site is contributed by Val279. Cys349 and Cys430 form a disulfide bridge. Asn379 carries an N-linked (GlcNAc...) asparagine glycan. Tyr390 contacts substrate. FAD-binding positions include Glu475 and 482-487 (GWIDST). 482-483 (GW) contacts substrate.

The protein belongs to the flavin monoamine oxidase family. FIG1 subfamily. In terms of assembly, homodimer; non-covalently linked. FAD is required as a cofactor. As to expression, expressed by the venom gland.

It localises to the secreted. The enzyme catalyses an L-alpha-amino acid + O2 + H2O = a 2-oxocarboxylate + H2O2 + NH4(+). It catalyses the reaction L-leucine + O2 + H2O = 4-methyl-2-oxopentanoate + H2O2 + NH4(+). Functionally, catalyzes an oxidative deamination of predominantly hydrophobic and aromatic L-amino acids, thus producing hydrogen peroxide that may contribute to the diverse toxic effects of this enzyme. Shows activity on L-Leu. Exhibits diverse biological activities, such as apoptosis, and inhibition of agonist- and shear stress-induced platelet aggregation (SIPA). Effects of snake L-amino oxidases on platelets are controversial, since they either induce aggregation or inhibit agonist-induced aggregation. These different effects are probably due to different experimental conditions. This protein may also induce hemorrhage, hemolysis, edema, antibacterial and antiparasitic activities. The protein is L-amino-acid oxidase of Gloydius blomhoffii (Mamushi).